The chain runs to 198 residues: Guanylate kinase (198 aa).

The Guanylate kinase-like domain maps to 4-186; the sequence is PRPVVLSGPS…AYATLKQALS (183 aa). ATP is bound at residue 14 to 19; sequence GAGKST. 37 to 51 is a substrate binding site; the sequence is SHTTRNPRPGEEDGK. Residues R44, R137, and R148 contribute to the active site. 171–172 serves as a coordination point for ATP; it reads ND.

It belongs to the guanylate kinase family. In terms of assembly, monomer. Interacts with RD3. In terms of tissue distribution, widely expressed. In retina is expressed in inner segment, outer nuclear layer, outer plexiform layer, inner plexiform layer, and ganglion cell layer (at protein level).

It is found in the photoreceptor inner segment. Its subcellular location is the cytoplasm. It localises to the cytosol. The protein resides in the mitochondrion. The enzyme catalyses GMP + ATP = GDP + ADP. Functionally, catalyzes the phosphorylation of GMP to GDP. Essential enzyme for recycling GMP and indirectly, cyclic GMP (cGMP). Involved in the cGMP metabolism in photoreceptors. The polypeptide is Guanylate kinase (Mus musculus (Mouse)).